Reading from the N-terminus, the 358-residue chain is Heme A synthase (358 aa).

8 helical membrane passes run 25-45, 111-131, 141-161, 176-196, 210-230, 269-289, 304-324, and 326-346; these read LVRY…MVGG, LLAR…WLTG, MLGL…MVAS, IHLT…RGLV, FAGW…LVAG, VQFV…LHAV, TIVL…TLLM, and APLH…AFAV. Residue histidine 273 participates in heme binding. Position 334 (histidine 334) interacts with heme.

The protein belongs to the COX15/CtaA family. Type 2 subfamily. Interacts with CtaB. Requires heme b as cofactor.

It localises to the cell membrane. The enzyme catalyses Fe(II)-heme o + 2 A + H2O = Fe(II)-heme a + 2 AH2. It participates in porphyrin-containing compound metabolism; heme A biosynthesis; heme A from heme O: step 1/1. Its function is as follows. Catalyzes the conversion of heme O to heme A by two successive hydroxylations of the methyl group at C8. The first hydroxylation forms heme I, the second hydroxylation results in an unstable dihydroxymethyl group, which spontaneously dehydrates, resulting in the formyl group of heme A. This Brucella suis (strain ATCC 23445 / NCTC 10510) protein is Heme A synthase.